A 77-amino-acid polypeptide reads, in one-letter code: Sec-independent protein translocase protein TatA (77 aa).

The chain crosses the membrane as a helical span at residues 1–21; sequence MGSFSIWHWLIVLVIVMLVFG. The interval 50 to 77 is disordered; the sequence is ADASTQQKISGGQTLEGEAREKVEKTHS. Residues 53–62 show a composition bias toward polar residues; that stretch reads STQQKISGGQ. Basic and acidic residues predominate over residues 66–77; it reads GEAREKVEKTHS.

Belongs to the TatA/E family. In terms of assembly, the Tat system comprises two distinct complexes: a TatABC complex, containing multiple copies of TatA, TatB and TatC subunits, and a separate TatA complex, containing only TatA subunits. Substrates initially bind to the TatABC complex, which probably triggers association of the separate TatA complex to form the active translocon.

Its subcellular location is the cell inner membrane. In terms of biological role, part of the twin-arginine translocation (Tat) system that transports large folded proteins containing a characteristic twin-arginine motif in their signal peptide across membranes. TatA could form the protein-conducting channel of the Tat system. This is Sec-independent protein translocase protein TatA from Azoarcus sp. (strain BH72).